Consider the following 352-residue polypeptide: Anthranilate phosphoribosyltransferase (352 aa).

5-phospho-alpha-D-ribose 1-diphosphate-binding positions include Gly-94, 97–98, Ser-102, 104–107, 122–130, and Ser-134; these read GS, NIST, and KHGNRAVSS. Residue Gly-94 participates in anthranilate binding. Ser-106 provides a ligand contact to Mg(2+). Asn-125 serves as a coordination point for anthranilate. An anthranilate-binding site is contributed by Arg-180. Mg(2+) contacts are provided by Asp-239 and Glu-240.

The protein belongs to the anthranilate phosphoribosyltransferase family. Homodimer. Mg(2+) is required as a cofactor.

It carries out the reaction N-(5-phospho-beta-D-ribosyl)anthranilate + diphosphate = 5-phospho-alpha-D-ribose 1-diphosphate + anthranilate. It participates in amino-acid biosynthesis; L-tryptophan biosynthesis; L-tryptophan from chorismate: step 2/5. Its function is as follows. Catalyzes the transfer of the phosphoribosyl group of 5-phosphorylribose-1-pyrophosphate (PRPP) to anthranilate to yield N-(5'-phosphoribosyl)-anthranilate (PRA). This chain is Anthranilate phosphoribosyltransferase, found in Geobacter sp. (strain M21).